A 98-amino-acid polypeptide reads, in one-letter code: Aspartyl/glutamyl-tRNA(Asn/Gln) amidotransferase subunit C (98 aa).

This sequence belongs to the GatC family. Heterotrimer of A, B and C subunits.

It carries out the reaction L-glutamyl-tRNA(Gln) + L-glutamine + ATP + H2O = L-glutaminyl-tRNA(Gln) + L-glutamate + ADP + phosphate + H(+). The catalysed reaction is L-aspartyl-tRNA(Asn) + L-glutamine + ATP + H2O = L-asparaginyl-tRNA(Asn) + L-glutamate + ADP + phosphate + 2 H(+). In terms of biological role, allows the formation of correctly charged Asn-tRNA(Asn) or Gln-tRNA(Gln) through the transamidation of misacylated Asp-tRNA(Asn) or Glu-tRNA(Gln) in organisms which lack either or both of asparaginyl-tRNA or glutaminyl-tRNA synthetases. The reaction takes place in the presence of glutamine and ATP through an activated phospho-Asp-tRNA(Asn) or phospho-Glu-tRNA(Gln). This chain is Aspartyl/glutamyl-tRNA(Asn/Gln) amidotransferase subunit C, found in Mycobacterium avium (strain 104).